The following is a 146-amino-acid chain: Gastrin-releasing peptide (146 aa).

The signal sequence occupies residues 1–23 (MRGREFPLVLLALVLCQAPRGPA). Met50 bears the Methionine amide mark. The propeptide occupies 54 to 146 (STGESPYAYE…QHEGRIPQLN (93 aa)). The disordered stretch occupies residues 95-146 (SHQPPQWEPLGIRQSTWDSKDGSNFKDMGPRLKVDGLSAPGSQHEGRIPQLN). Basic and acidic residues predominate over residues 112 to 128 (DSKDGSNFKDMGPRLKV).

It belongs to the bombesin/neuromedin-B/ranatensin family.

The protein resides in the secreted. It is found in the cytoplasmic vesicle. The protein localises to the secretory vesicle lumen. It localises to the cell projection. Its subcellular location is the neuron projection. Stimulates the release of gastrin and other gastrointestinal hormones. Contributes to the perception of prurient stimuli and to the transmission of itch signals in the spinal cord that promote scratching behavior. Contributes primarily to nonhistaminergic itch sensation. In one study, shown to act in the amygdala as part of an inhibitory network which inhibits memory specifically related to learned fear. In another study, shown to act on vasoactive intestinal peptide (VIP)-expressing cells in the auditory cortex, most likely via extrasynaptic diffusion from local and long-range sources, to mediate disinhibition of glutamatergic cells via VIP cell-specific GRPR signaling which leads to enhanced auditory fear memories. Contributes to the regulation of food intake. Inhibits voltage-gated sodium channels but enhances voltage-gated potassium channels in hippocampal neurons. Induces sighing by acting directly on the pre-Botzinger complex, a cluster of several thousand neurons in the ventrolateral medulla responsible for inspiration during respiratory activity. In terms of biological role, induces an itch response through activation of receptors present on mast cells, triggering mast cell degranulation. The polypeptide is Gastrin-releasing peptide (GRP) (Sus scrofa (Pig)).